Consider the following 218-residue polypeptide: Protein-L-isoaspartate O-methyltransferase (218 aa).

Ser-60 is an active-site residue.

This sequence belongs to the methyltransferase superfamily. L-isoaspartyl/D-aspartyl protein methyltransferase family.

It is found in the cytoplasm. The catalysed reaction is [protein]-L-isoaspartate + S-adenosyl-L-methionine = [protein]-L-isoaspartate alpha-methyl ester + S-adenosyl-L-homocysteine. Functionally, catalyzes the methyl esterification of L-isoaspartyl residues in peptides and proteins that result from spontaneous decomposition of normal L-aspartyl and L-asparaginyl residues. It plays a role in the repair and/or degradation of damaged proteins. The sequence is that of Protein-L-isoaspartate O-methyltransferase from Roseiflexus sp. (strain RS-1).